Here is a 963-residue protein sequence, read N- to C-terminus: Bifunctional glutamine synthetase adenylyltransferase/adenylyl-removing enzyme (963 aa).

The segment at 1 to 453 (MLTTLIPLSQ…IFNEIIGEEE (453 aa)) is adenylyl removase. Residues 461–963 (VNEKLAEWKD…VREMWQRLLA (503 aa)) are adenylyl transferase.

The protein belongs to the GlnE family. Mg(2+) serves as cofactor.

The enzyme catalyses [glutamine synthetase]-O(4)-(5'-adenylyl)-L-tyrosine + phosphate = [glutamine synthetase]-L-tyrosine + ADP. It carries out the reaction [glutamine synthetase]-L-tyrosine + ATP = [glutamine synthetase]-O(4)-(5'-adenylyl)-L-tyrosine + diphosphate. Involved in the regulation of glutamine synthetase GlnA, a key enzyme in the process to assimilate ammonia. When cellular nitrogen levels are high, the C-terminal adenylyl transferase (AT) inactivates GlnA by covalent transfer of an adenylyl group from ATP to specific tyrosine residue of GlnA, thus reducing its activity. Conversely, when nitrogen levels are low, the N-terminal adenylyl removase (AR) activates GlnA by removing the adenylyl group by phosphorolysis, increasing its activity. The regulatory region of GlnE binds the signal transduction protein PII (GlnB) which indicates the nitrogen status of the cell. This Mannheimia haemolytica (Pasteurella haemolytica) protein is Bifunctional glutamine synthetase adenylyltransferase/adenylyl-removing enzyme.